The chain runs to 87 residues: UPF0250 protein plu1293 (87 aa).

The protein belongs to the UPF0250 family.

The chain is UPF0250 protein plu1293 from Photorhabdus laumondii subsp. laumondii (strain DSM 15139 / CIP 105565 / TT01) (Photorhabdus luminescens subsp. laumondii).